Here is a 147-residue protein sequence, read N- to C-terminus: Myoglobin (147 aa).

The Globin domain occupies 2 to 141; the sequence is ADFDAVLKCW…VIADLEANYK (140 aa). His-60 is a binding site for nitrite. Position 60 (His-60) interacts with O2. Residue His-89 participates in heme b binding.

This sequence belongs to the globin family. In terms of assembly, monomeric.

Its subcellular location is the cytoplasm. The protein localises to the sarcoplasm. It catalyses the reaction Fe(III)-heme b-[protein] + nitric oxide + H2O = Fe(II)-heme b-[protein] + nitrite + 2 H(+). The enzyme catalyses H2O2 + AH2 = A + 2 H2O. In terms of biological role, monomeric heme protein which primary function is to store oxygen and facilitate its diffusion within muscle tissues. Reversibly binds oxygen through a pentacoordinated heme iron and enables its timely and efficient release as needed during periods of heightened demand. Depending on the oxidative conditions of tissues and cells, and in addition to its ability to bind oxygen, it also has a nitrite reductase activity whereby it regulates the production of bioactive nitric oxide. Under stress conditions, like hypoxia and anoxia, it also protects cells against reactive oxygen species thanks to its pseudoperoxidase activity. The polypeptide is Myoglobin (mb) (Auxis rochei (Bullet tuna)).